Here is a 563-residue protein sequence, read N- to C-terminus: Tripeptidyl-peptidase 1 (563 aa).

The first 19 residues, Met1 to Cys19, serve as a signal peptide directing secretion. The propeptide at Ser20–Gly195 is removed in mature form. An intrachain disulfide couples Cys111 to Cys122. A Peptidase S53 domain is found at Gly199–Pro563. 2 N-linked (GlcNAc...) asparagine glycosylation sites follow: Asn210 and Asn222. Active-site charge relay system residues include Glu272 and Asp276. N-linked (GlcNAc...) asparagine glycosylation is found at Asn286, Asn313, and Asn443. Disulfide bonds link Cys365–Cys526 and Cys522–Cys537. Catalysis depends on Ser475, which acts as the Charge relay system. The Ca(2+) site is built by Asp517 and Val518. Ca(2+) is bound by residues Gly539, Gly541, and Asp543.

In terms of assembly, monomer. Interacts with CLN5. Interacts with CLN3. Ca(2+) is required as a cofactor. Post-translationally, activated by autocatalytic proteolytical processing upon acidification. N-glycosylation is required for processing and activity.

Its subcellular location is the lysosome. The protein resides in the melanosome. It catalyses the reaction Release of an N-terminal tripeptide from a polypeptide, but also has endopeptidase activity.. Functionally, lysosomal serine protease with tripeptidyl-peptidase I activity. May act as a non-specific lysosomal peptidase which generates tripeptides from the breakdown products produced by lysosomal proteinases. Requires substrates with an unsubstituted N-terminus. The protein is Tripeptidyl-peptidase 1 (TPP1) of Bos taurus (Bovine).